Here is a 72-residue protein sequence, read N- to C-terminus: Kappa-conotoxin PVIIA (72 aa).

The N-terminal stretch at 1–22 (MKLTCVVIVVVLFLTACQLITA) is a signal peptide. Residues 23–45 (DDSRRTQKHRALRSTTKLSLSTR) constitute a propeptide that is removed on maturation. Cystine bridges form between C46–C61, C53–C65, and C60–C71. Position 49 is a 4-hydroxyproline (P49).

This sequence belongs to the conotoxin O1 superfamily. This toxin is not amidated at the C-terminal Val residue. Expressed by the venom duct.

The protein localises to the secreted. Functionally, kappa-conotoxins bind and inhibit voltage-gated potassium channels (Kv). This toxin inhibits the drosophila Shaker channel (IC(50)=57-80 nM). In vivo, when tested in fish, this toxin induces hyperactivity, followed by continuous contraction and extension of major fins, without immobilization or death. Injection of this peptide together with the delta-conotoxin PVIA causes the sudden tetanus of prey (STOP) syndrome, which is a single, lethal 'fin-pop' in envenomed fish. When tested in mice, induces hyperactivity. This chain is Kappa-conotoxin PVIIA, found in Conus purpurascens (Purple cone).